The primary structure comprises 193 residues: CRIB domain-containing protein RIC5 (193 aa).

Residues 29 to 42 (IGIPTDVKHVAHIG) form the CRIB domain. The segment at 42–193 (GWEGPSATTP…CAGLGSSTGR (152 aa)) is disordered. The segment covering 55–67 (HDFKPTDQTKTET) has biased composition (basic and acidic residues). A compositionally biased stretch (polar residues) spans 90–100 (STGNNSPTESP). Low complexity predominate over residues 123-134 (GSGSESGSGLEL).

In terms of assembly, interacts with ARAC11/ROP1. Expressed in flowers and pollen.

Its subcellular location is the cell membrane. In terms of biological role, functions as a downstream effector of Rho-related GTP binding proteins of the 'Rho of Plants' (ROPs) family. Participates in the propagation of ROP GTPase signals in specific cellular responses. Is involved in pollen tube growth regulation through its interaction with ARAC11/ROP1. The protein is CRIB domain-containing protein RIC5 (RIC5) of Arabidopsis thaliana (Mouse-ear cress).